The following is a 702-amino-acid chain: Ferrioxamine B receptor (702 aa).

The N-terminal stretch at 1–30 is a signal peptide; the sequence is MPLEMFMFATTRMALLIGGAIGGATFPLFA. In terms of domain architecture, TBDR plug spans 55–168; sequence PDIETPQSVS…PGGIVALTSR (114 aa). The region spanning 173–702 is the TBDR beta-barrel domain; that stretch reads DAGGEVKLFA…SIVGSVSWAF (530 aa).

It belongs to the TonB-dependent receptor family.

It is found in the cell outer membrane. Ferrioxamine binding and uptake, in association with the TonB protein. The chain is Ferrioxamine B receptor (foxA) from Salmonella typhimurium (strain LT2 / SGSC1412 / ATCC 700720).